A 209-amino-acid chain; its full sequence is Isopentenyl-diphosphate Delta-isomerase (209 aa).

Positions 31 and 38 each coordinate Mn(2+). Positions 36-171 (PLHLAFSVYI…RLLVSPWCRA (136 aa)) constitute a Nudix hydrolase domain. The active site involves C73. Position 73 (C73) interacts with Mg(2+). H75 contacts Mn(2+). E93 provides a ligand contact to Mg(2+). The Mn(2+) site is built by E120 and E122. E122 is an active-site residue.

The protein belongs to the IPP isomerase type 1 family. Requires Mg(2+) as cofactor. Mn(2+) is required as a cofactor.

The protein resides in the cytoplasm. It catalyses the reaction isopentenyl diphosphate = dimethylallyl diphosphate. It participates in isoprenoid biosynthesis; dimethylallyl diphosphate biosynthesis; dimethylallyl diphosphate from isopentenyl diphosphate: step 1/1. Catalyzes the 1,3-allylic rearrangement of the homoallylic substrate isopentenyl (IPP) to its highly electrophilic allylic isomer, dimethylallyl diphosphate (DMAPP). The polypeptide is Isopentenyl-diphosphate Delta-isomerase (Rhizobium rhizogenes (Agrobacterium rhizogenes)).